The following is a 209-amino-acid chain: Uridine kinase (209 aa).

Glycine 12 to threonine 19 lines the ATP pocket.

Belongs to the uridine kinase family.

Its subcellular location is the cytoplasm. The catalysed reaction is uridine + ATP = UMP + ADP + H(+). The enzyme catalyses cytidine + ATP = CMP + ADP + H(+). The protein operates within pyrimidine metabolism; CTP biosynthesis via salvage pathway; CTP from cytidine: step 1/3. It participates in pyrimidine metabolism; UMP biosynthesis via salvage pathway; UMP from uridine: step 1/1. This Chloroflexus aggregans (strain MD-66 / DSM 9485) protein is Uridine kinase.